The sequence spans 271 residues: Bifunctional protein FolD (271 aa).

NADP(+)-binding positions include 154–156 (GRS), T181, and I222.

This sequence belongs to the tetrahydrofolate dehydrogenase/cyclohydrolase family. Homodimer.

It catalyses the reaction (6R)-5,10-methylene-5,6,7,8-tetrahydrofolate + NADP(+) = (6R)-5,10-methenyltetrahydrofolate + NADPH. The enzyme catalyses (6R)-5,10-methenyltetrahydrofolate + H2O = (6R)-10-formyltetrahydrofolate + H(+). Its pathway is one-carbon metabolism; tetrahydrofolate interconversion. Functionally, catalyzes the oxidation of 5,10-methylenetetrahydrofolate to 5,10-methenyltetrahydrofolate and then the hydrolysis of 5,10-methenyltetrahydrofolate to 10-formyltetrahydrofolate. This chain is Bifunctional protein FolD, found in Thermosipho melanesiensis (strain DSM 12029 / CIP 104789 / BI429).